A 263-amino-acid polypeptide reads, in one-letter code: 3-methyl-2-oxobutanoate hydroxymethyltransferase (263 aa).

2 residues coordinate Mg(2+): D46 and D85. Residues 46-47 (DS), D85, and K115 contribute to the 3-methyl-2-oxobutanoate site. E117 lines the Mg(2+) pocket. Catalysis depends on E180, which acts as the Proton acceptor.

The protein belongs to the PanB family. As to quaternary structure, homodecamer; pentamer of dimers. Requires Mg(2+) as cofactor.

Its subcellular location is the cytoplasm. It catalyses the reaction 3-methyl-2-oxobutanoate + (6R)-5,10-methylene-5,6,7,8-tetrahydrofolate + H2O = 2-dehydropantoate + (6S)-5,6,7,8-tetrahydrofolate. The protein operates within cofactor biosynthesis; (R)-pantothenate biosynthesis; (R)-pantoate from 3-methyl-2-oxobutanoate: step 1/2. Its function is as follows. Catalyzes the reversible reaction in which hydroxymethyl group from 5,10-methylenetetrahydrofolate is transferred onto alpha-ketoisovalerate to form ketopantoate. This chain is 3-methyl-2-oxobutanoate hydroxymethyltransferase, found in Corynebacterium diphtheriae (strain ATCC 700971 / NCTC 13129 / Biotype gravis).